The following is a 1368-amino-acid chain: DNA-directed RNA polymerase subunit beta (1368 aa).

This sequence belongs to the RNA polymerase beta chain family. The RNAP catalytic core consists of 2 alpha, 1 beta, 1 beta' and 1 omega subunit. When a sigma factor is associated with the core the holoenzyme is formed, which can initiate transcription.

The catalysed reaction is RNA(n) + a ribonucleoside 5'-triphosphate = RNA(n+1) + diphosphate. Its function is as follows. DNA-dependent RNA polymerase catalyzes the transcription of DNA into RNA using the four ribonucleoside triphosphates as substrates. This Burkholderia multivorans (strain ATCC 17616 / 249) protein is DNA-directed RNA polymerase subunit beta.